Here is a 277-residue protein sequence, read N- to C-terminus: Probable ketoamine kinase HMPREF0351_12196 (277 aa).

Position 84–86 (84–86) interacts with ATP; the sequence is EWI. Catalysis depends on D186, which acts as the Proton acceptor.

The protein belongs to the fructosamine kinase family.

The enzyme catalyses N(6)-(D-ribulosyl)-L-lysine + ATP = N(6)-(3-O-phospho-D-ribulosyl)-L-lysine + ADP + H(+). It carries out the reaction N-(D-ribulosyl)-cadaverine + ATP = N-(3-O-phospho-D-ribulosyl)-cadaverine + ADP + H(+). The catalysed reaction is N(6)-(D-erythrulosyl)-L-lysine + ATP = N(6)-(3-O-phospho-D-erythrulosyl)-L-lysine + ADP + H(+). It catalyses the reaction N-(D-erythrulosyl)-cadaverine + ATP = N-(3-O-phospho-D-erythrulosyl)-cadaverine + ADP + H(+). The enzyme catalyses N(6)-D-ribulosyl-L-lysyl-[protein] + ATP = N(6)-(3-O-phospho-D-ribulosyl)-L-lysyl-[protein] + ADP + H(+). It carries out the reaction N(6)-(D-erythrulosyl)-L-lysyl-[protein] + ATP = N(6)-(3-O-phospho-D-erythrulosyl)-L-lysyl-[protein] + ADP + H(+). Ketoamine kinase that phosphorylates ketoamines, such as erythruloselysine, erythrulosecadaverine, ribuloselysine and ribulosecadaverine, on the third carbon of the sugar moiety to generate ketoamine 3-phosphate. Has higher activity on free lysine (erythruloselysine and ribuloselysine), than on ribuloselysine and erythruloselysine residues on glycated proteins. This Enterococcus faecium (strain ATCC BAA-472 / TX0016 / DO) protein is Probable ketoamine kinase HMPREF0351_12196.